A 136-amino-acid chain; its full sequence is Large ribosomal subunit protein uL16 (136 aa).

The protein belongs to the universal ribosomal protein uL16 family. In terms of assembly, part of the 50S ribosomal subunit.

Its function is as follows. Binds 23S rRNA and is also seen to make contacts with the A and possibly P site tRNAs. This chain is Large ribosomal subunit protein uL16, found in Shewanella piezotolerans (strain WP3 / JCM 13877).